A 376-amino-acid polypeptide reads, in one-letter code: E3 ubiquitin-protein ligase RNF133 (376 aa).

The 103-residue stretch at 65–167 (SSTLKRVAGV…LKGTEIFHLI (103 aa)) folds into the PA domain. The chain crosses the membrane as a helical span at residues 190 to 210 (YLVSFVIVTTATLAYFIFYHI). The segment at 256–297 (CVICFERYKPNDIVRILTCKHFFHKNCIDPWILPHGTCPICK) adopts an RING-type; atypical zinc-finger fold. The segment at 327–376 (ETLSPSEEETNNEVSPAGTSDKVIHVEENPTSQNNDIQPHSVVEDVHPSP) is disordered. A compositionally biased stretch (polar residues) spans 355 to 364 (NPTSQNNDIQ).

Interacts with E3 ligase UBE2J1. Post-translationally, auto-ubiquitinated. Expression is testis-specific.

Its subcellular location is the endoplasmic reticulum membrane. It catalyses the reaction S-ubiquitinyl-[E2 ubiquitin-conjugating enzyme]-L-cysteine + [acceptor protein]-L-lysine = [E2 ubiquitin-conjugating enzyme]-L-cysteine + N(6)-ubiquitinyl-[acceptor protein]-L-lysine.. Its pathway is protein modification; protein ubiquitination. Functionally, has E3 ubiquitin-protein ligase activity. Plays a role in male fecundity through the interaction with the E2 ubituitin-protein ligase UBE2J1. This chain is E3 ubiquitin-protein ligase RNF133, found in Homo sapiens (Human).